The following is a 429-amino-acid chain: Putative F-box/kelch-repeat protein At2g21680 (429 aa).

The segment at 1 to 32 is disordered; sequence MVLISETSDDGSTGGDHQIKKPKKEEDRNKKL. A compositionally biased stretch (basic and acidic residues) spans 17 to 29; the sequence is HQIKKPKKEEDRN. Positions 37-84 constitute an F-box domain; the sequence is QVSLPIPEELILRCFLLVRRCHHPSLSLVCRSFHSLMSKLYDDRLRLG. Kelch repeat units follow at residues 144 to 175, 176 to 221, 222 to 267, 269 to 313, and 315 to 359; these read DIYV…RRGE, TSIR…VIDG, KIYV…LTYA, MKEK…VVDN, and LFCI…DGYK.

The chain is Putative F-box/kelch-repeat protein At2g21680 from Arabidopsis thaliana (Mouse-ear cress).